Here is a 189-residue protein sequence, read N- to C-terminus: Pyridoxal 5'-phosphate synthase subunit PdxT (189 aa).

46-48 (GES) serves as a coordination point for L-glutamine. Residue cysteine 78 is the Nucleophile of the active site. Residues arginine 107 and 136 to 137 (IR) each bind L-glutamine. Catalysis depends on charge relay system residues histidine 173 and glutamate 175.

It belongs to the glutaminase PdxT/SNO family. In the presence of PdxS, forms a dodecamer of heterodimers. Only shows activity in the heterodimer.

The enzyme catalyses aldehydo-D-ribose 5-phosphate + D-glyceraldehyde 3-phosphate + L-glutamine = pyridoxal 5'-phosphate + L-glutamate + phosphate + 3 H2O + H(+). It carries out the reaction L-glutamine + H2O = L-glutamate + NH4(+). It participates in cofactor biosynthesis; pyridoxal 5'-phosphate biosynthesis. Catalyzes the hydrolysis of glutamine to glutamate and ammonia as part of the biosynthesis of pyridoxal 5'-phosphate. The resulting ammonia molecule is channeled to the active site of PdxS. This Roseiflexus sp. (strain RS-1) protein is Pyridoxal 5'-phosphate synthase subunit PdxT.